Reading from the N-terminus, the 374-residue chain is Peptide chain release factor 2 (374 aa).

Gln-252 bears the N5-methylglutamine mark.

Belongs to the prokaryotic/mitochondrial release factor family. Post-translationally, methylated by PrmC. Methylation increases the termination efficiency of RF2.

It is found in the cytoplasm. Its function is as follows. Peptide chain release factor 2 directs the termination of translation in response to the peptide chain termination codons UGA and UAA. This is Peptide chain release factor 2 from Xanthomonas euvesicatoria pv. vesicatoria (strain 85-10) (Xanthomonas campestris pv. vesicatoria).